Here is a 361-residue protein sequence, read N- to C-terminus: tRNA/tmRNA (uracil-C(5))-methyltransferase (361 aa).

S-adenosyl-L-methionine-binding residues include glutamine 183, tyrosine 211, asparagine 216, glutamate 232, and aspartate 294. Catalysis depends on cysteine 319, which acts as the Nucleophile. The active-site Proton acceptor is glutamate 353.

Belongs to the class I-like SAM-binding methyltransferase superfamily. RNA M5U methyltransferase family. TrmA subfamily.

It catalyses the reaction uridine(54) in tRNA + S-adenosyl-L-methionine = 5-methyluridine(54) in tRNA + S-adenosyl-L-homocysteine + H(+). The enzyme catalyses uridine(341) in tmRNA + S-adenosyl-L-methionine = 5-methyluridine(341) in tmRNA + S-adenosyl-L-homocysteine + H(+). In terms of biological role, dual-specificity methyltransferase that catalyzes the formation of 5-methyluridine at position 54 (m5U54) in all tRNAs, and that of position 341 (m5U341) in tmRNA (transfer-mRNA). In Acinetobacter baumannii (strain AYE), this protein is tRNA/tmRNA (uracil-C(5))-methyltransferase.